The sequence spans 199 residues: Interferon kappa (199 aa).

A signal peptide spans 1–21; sequence MTPKFLWLVALVALYIPPIQS. Cystine bridges form between cysteine 24/cysteine 119 and cysteine 49/cysteine 162.

It belongs to the alpha/beta interferon family. Expressed at low levels in peritoneal macrophages.

The protein localises to the secreted. In terms of biological role, may play a role in the regulation of immune cell function. The protein is Interferon kappa (Ifnk) of Mus musculus (Mouse).